A 472-amino-acid polypeptide reads, in one-letter code: Chromosomal replication initiator protein DnaA (472 aa).

The domain I, interacts with DnaA modulators stretch occupies residues 1-73; that stretch reads MSNMEHDRWS…LTCWQAEMPE (73 aa). Residues 73-128 are domain II; sequence EVCRIDLTVRSPMRAAVTKEAPAPAEHRRDEHRPAADARSHAAAPAPSNHDALGGS. The tract at residues 89–127 is disordered; that stretch reads VTKEAPAPAEHRRDEHRPAADARSHAAAPAPSNHDALGG. Residues 97–112 are compositionally biased toward basic and acidic residues; the sequence is AEHRRDEHRPAADARS. Residues 113–124 show a composition bias toward low complexity; it reads HAAAPAPSNHDA. The tract at residues 129–351 is domain III, AAA+ region; the sequence is PLDPRLTFAS…GAINRLLAHS (223 aa). Residues G176, G178, K179, and T180 each contribute to the ATP site. A domain IV, binds dsDNA region spans residues 352 to 472; the sequence is KLNAQPVTLE…VESLKRQLQE (121 aa).

This sequence belongs to the DnaA family. As to quaternary structure, oligomerizes as a right-handed, spiral filament on DNA at oriC.

The protein localises to the cytoplasm. Its function is as follows. Plays an essential role in the initiation and regulation of chromosomal replication. ATP-DnaA binds to the origin of replication (oriC) to initiate formation of the DNA replication initiation complex once per cell cycle. Binds the DnaA box (a 9 base pair repeat at the origin) and separates the double-stranded (ds)DNA. Forms a right-handed helical filament on oriC DNA; dsDNA binds to the exterior of the filament while single-stranded (ss)DNA is stabiized in the filament's interior. The ATP-DnaA-oriC complex binds and stabilizes one strand of the AT-rich DNA unwinding element (DUE), permitting loading of DNA polymerase. After initiation quickly degrades to an ADP-DnaA complex that is not apt for DNA replication. Binds acidic phospholipids. The polypeptide is Chromosomal replication initiator protein DnaA (Rhodopseudomonas palustris (strain BisB5)).